A 123-amino-acid chain; its full sequence is TYMS opposite strand protein (123 aa).

The disordered stretch occupies residues 57-111 (MRPLPRRIEVRTKRGPQRPAAPERSPQPRLPPSRHPSRRGPRRHLSGCSAPACRI). Over residues 91 to 101 (HPSRRGPRRHL) the composition is skewed to basic residues.

This Homo sapiens (Human) protein is TYMS opposite strand protein (TYMSOS).